The following is a 232-amino-acid chain: Ribose-5-phosphate isomerase A (232 aa).

Substrate is bound by residues 28-31 (TGST), 83-86 (DGAD), and 96-99 (KGGG). E105 serves as the catalytic Proton acceptor. K123 is a substrate binding site.

Belongs to the ribose 5-phosphate isomerase family. As to quaternary structure, homodimer.

It carries out the reaction aldehydo-D-ribose 5-phosphate = D-ribulose 5-phosphate. It functions in the pathway carbohydrate degradation; pentose phosphate pathway; D-ribose 5-phosphate from D-ribulose 5-phosphate (non-oxidative stage): step 1/1. In terms of biological role, catalyzes the reversible conversion of ribose-5-phosphate to ribulose 5-phosphate. The polypeptide is Ribose-5-phosphate isomerase A (Rhodopseudomonas palustris (strain BisB5)).